The following is a 111-amino-acid chain: Universal stress protein B (111 aa).

A run of 2 helical transmembrane segments spans residues Met-1 to Arg-21 and Phe-90 to Trp-110.

The protein belongs to the universal stress protein B family.

The protein localises to the cell inner membrane. The sequence is that of Universal stress protein B from Enterobacter sp. (strain 638).